Reading from the N-terminus, the 364-residue chain is GDSL esterase/lipase 7 (364 aa).

The signal sequence occupies residues 1–19 (MKSLLICLVLLELVWLGNG). Catalysis depends on serine 37, which acts as the Nucleophile. Asparagine 236, asparagine 237, and asparagine 264 each carry an N-linked (GlcNAc...) asparagine glycan. Active-site residues include aspartate 329 and histidine 332. N-linked (GlcNAc...) asparagine glycosylation is present at asparagine 351.

Belongs to the 'GDSL' lipolytic enzyme family.

The protein localises to the secreted. The chain is GDSL esterase/lipase 7 (GLIP7) from Arabidopsis thaliana (Mouse-ear cress).